The chain runs to 289 residues: Thiosulfate sulfurtransferase (289 aa).

In terms of domain architecture, Rhodanese 1 spans valine 24–alanine 142. Residues glutamate 143 to lysine 158 are hinge. The region spanning glycine 172–lysine 284 is the Rhodanese 2 domain. Arginine 186 serves as a coordination point for substrate. The Cysteine persulfide intermediate role is filled by cysteine 244. A substrate-binding site is contributed by lysine 246.

Monomer. In terms of tissue distribution, expressed in numerous tissues.

The protein localises to the mitochondrion matrix. It catalyses the reaction thiosulfate + hydrogen cyanide = thiocyanate + sulfite + 2 H(+). Functionally, together with MRPL18, acts as a mitochondrial import factor for the cytosolic 5S rRNA. Only the nascent unfolded cytoplasmic form is able to bind to the 5S rRNA. Formation of iron-sulfur complexes and cyanide detoxification. In Gallus gallus (Chicken), this protein is Thiosulfate sulfurtransferase (TST).